Consider the following 154-residue polypeptide: Hexachlorocyclohexane dehydrochlorinase 1 (154 aa).

Asp25 is an active-site residue. Residue His73 is the Proton acceptor of the active site.

This sequence belongs to the HCH dehydrochlorinase family. In terms of assembly, homotrimer.

The protein localises to the periplasm. The enzyme catalyses gamma-hexachlorocyclohexane = (3R,4S,5S,6R)-pentachlorocyclohexene + chloride + H(+). It carries out the reaction (3R,4S,5S,6R)-pentachlorocyclohexene = (3R,6R)-1,3,4,6-tetrachlorocyclohexa-1,4-diene + chloride + H(+). The protein operates within xenobiotic degradation; hexachlorocyclohexane degradation. Functionally, catalyzes the conversion of the important environmental pollutant gamma-hexachlorocyclohexane (gamma-HCH or lindane) to 1,3,4,6-tetrachloro-1,4-cyclohexadiene (1,4-TCDN) via gamma-pentachlorocyclohexene (gamma-PCCH). Proceeds by two successive 1,2-anti conformationally dependent dehydrochlorinations. Also shows activity with alpha- and delta-HCH, giving alpha- and delta-PCCH respectively, but not with the beta isomer. This chain is Hexachlorocyclohexane dehydrochlorinase 1, found in Sphingobium indicum (strain DSM 16412 / CCM 7286 / MTCC 6364 / B90A).